A 531-amino-acid polypeptide reads, in one-letter code: Calcium-dependent protein kinase 21 (531 aa).

Basic residues predominate over residues 1-10 (MGCFSSKHRK). The tract at residues 1 to 62 (MGCFSSKHRK…STPSSNPVSV (62 aa)) is disordered. G2 is lipidated: N-myristoyl glycine. A compositionally biased stretch (polar residues) spans 48 to 60 (IHQQISTPSSNPV). The Protein kinase domain maps to 80–338 (YSLGKELGRG…AAQVLEHPWI (259 aa)). ATP is bound by residues 86-94 (LGRGQFGIT) and K109. D204 (proton acceptor) is an active-site residue. S244 is modified (phosphoserine). The interval 343 to 373 (APDKPIDSAVLSRMKQFRAMNKLKKLALKVI) is autoinhibitory domain. 4 consecutive EF-hand domains span residues 380–415 (EEIKGLKTMFANIDTDKSGTITYEELKTGLTRLGSR), 416–451 (LSETEVKQLMEAADVDGNGTIDYYEFISATMHRYKL), 452–487 (DRDEHVYKAFQHFDKDNSGHITRDELESAMKEYGMG), and 488–522 (DEASIKEVISEVDTDNDGRINFEEFCAMMRSGSTQ). Ca(2+)-binding residues include D393, D395, S397, T399, E404, D429, D431, N433, T435, E440, D465, D467, S469, H471, E476, D500, D502, D504, R506, and E511.

Belongs to the protein kinase superfamily. Ser/Thr protein kinase family. CDPK subfamily. Interacts with SLAC1 and ABI1.

It is found in the cell membrane. It catalyses the reaction L-seryl-[protein] + ATP = O-phospho-L-seryl-[protein] + ADP + H(+). The catalysed reaction is L-threonyl-[protein] + ATP = O-phospho-L-threonyl-[protein] + ADP + H(+). Its activity is regulated as follows. Activated by calcium. Autophosphorylation may play an important role in the regulation of the kinase activity. Functionally, may play a role in signal transduction pathways that involve calcium as a second messenger. Mediates the phosphorylation and activation of the S-type anion efflux channel SLAC1. This is Calcium-dependent protein kinase 21 (CPK21) from Arabidopsis thaliana (Mouse-ear cress).